The following is a 460-amino-acid chain: DNA repair protein RadA (460 aa).

The C4-type zinc finger occupies 11–28 (CNECGADYPRWQGQCSAC). Residue 102–109 (GNPGAGKS) coordinates ATP. Positions 258-262 (KNRFG) match the RadA KNRFG motif motif. The lon-protease-like stretch occupies residues 357 to 460 (DVFVNVVGGV…ADALSVFDDL (104 aa)).

This sequence belongs to the RecA family. RadA subfamily.

Functionally, DNA-dependent ATPase involved in processing of recombination intermediates, plays a role in repairing DNA breaks. Stimulates the branch migration of RecA-mediated strand transfer reactions, allowing the 3' invading strand to extend heteroduplex DNA faster. Binds ssDNA in the presence of ADP but not other nucleotides, has ATPase activity that is stimulated by ssDNA and various branched DNA structures, but inhibited by SSB. Does not have RecA's homology-searching function. This chain is DNA repair protein RadA, found in Salmonella typhimurium (strain LT2 / SGSC1412 / ATCC 700720).